The sequence spans 75 residues: SPbeta prophage-derived uncharacterized protein YorX (75 aa).

The polypeptide is SPbeta prophage-derived uncharacterized protein YorX (yorX) (Bacillus subtilis (strain 168)).